Here is a 298-residue protein sequence, read N- to C-terminus: Beta-1,3-galactosyltransferase 5 (298 aa).

At 1 to 7 (MAFPKMR) the chain is on the cytoplasmic side. Residues 8-28 (LMYICLLVLGALCLYFSMYSL) form a helical; Signal-anchor for type II membrane protein membrane-spanning segment. The Lumenal portion of the chain corresponds to 29 to 298 (NPFKEQSFVY…PRTLLDYWQA (270 aa)). N-linked (GlcNAc...) asparagine glycans are attached at residues N130, N174, and N231.

Belongs to the glycosyltransferase 31 family.

It is found in the golgi apparatus membrane. The enzyme catalyses a globoside Gb4Cer (d18:1(4E)) + UDP-alpha-D-galactose = a globoside GalGb4Cer (d18:1(4E)) + UDP + H(+). The protein operates within protein modification; protein glycosylation. Its function is as follows. Catalyzes the transfer of Gal to GlcNAc-based acceptors with a preference for the core3 O-linked glycan GlcNAc(beta1,3)GalNAc structure. Can use glycolipid LC3Cer as an efficient acceptor. In Gorilla gorilla gorilla (Western lowland gorilla), this protein is Beta-1,3-galactosyltransferase 5 (B3GALT5).